Consider the following 360-residue polypeptide: sn-glycerol-3-phosphate import ATP-binding protein UgpC (360 aa).

In terms of domain architecture, ABC transporter spans 4–235 (LSLKGVRKSY…PATTFVASFI (232 aa)). 37–44 (GPSGCGKS) contacts ATP.

The protein belongs to the ABC transporter superfamily. sn-glycerol-3-phosphate importer (TC 3.A.1.1.3) family. The complex is composed of two ATP-binding proteins (UgpC), two transmembrane proteins (UgpA and UgpE) and a solute-binding protein (UgpB).

The protein resides in the cell inner membrane. The enzyme catalyses sn-glycerol 3-phosphate(out) + ATP + H2O = sn-glycerol 3-phosphate(in) + ADP + phosphate + H(+). Its function is as follows. Part of the ABC transporter complex UgpBAEC involved in sn-glycerol-3-phosphate (G3P) import. Responsible for energy coupling to the transport system. The chain is sn-glycerol-3-phosphate import ATP-binding protein UgpC from Burkholderia thailandensis (strain ATCC 700388 / DSM 13276 / CCUG 48851 / CIP 106301 / E264).